We begin with the raw amino-acid sequence, 259 residues long: Gem-associated protein 2 (259 aa).

Belongs to the gemin-2 family. In terms of assembly, forms a stable heteromeric complex with survival of motor neuron protein (SMN), GEMIN3 and GEMIN4. The SMN complex is associated with the spliceosomal snRNAs U1 and U5 in the cytoplasm of oocytes.

It localises to the nucleus. Its subcellular location is the gem. It is found in the cytoplasm. Functionally, the SMN complex catalyzes the assembly of small nuclear ribonucleoproteins (snRNPs), the building blocks of the spliceosome, and thereby plays an important role in the splicing of cellular pre-mRNAs. Most spliceosomal snRNPs contain a common set of Sm proteins SNRPB, SNRPD1, SNRPD2, SNRPD3, SNRPE, SNRPF and SNRPG that assemble in a heptameric protein ring on the Sm site of the small nuclear RNA to form the core snRNP (Sm core). In the cytosol, the Sm proteins SNRPD1, SNRPD2, SNRPE, SNRPF and SNRPG (5Sm) are trapped in an inactive 6S pICln-Sm complex by the chaperone CLNS1A that controls the assembly of the core snRNP. To assemble core snRNPs, the SMN complex accepts the trapped 5Sm proteins from CLNS1A. Binding of snRNA inside 5Sm ultimately triggers eviction of the SMN complex, thereby allowing binding of SNRPD3 and SNRPB to complete assembly of the core snRNP. Within the SMN complex, GEMIN2 constrains the conformation of 5Sm, thereby promoting 5Sm binding to snRNA containing the snRNP code (a nonameric Sm site and a 3'-adjacent stem-loop), thus preventing progression of assembly until a cognate substrate is bound. This chain is Gem-associated protein 2 (gemin2), found in Xenopus laevis (African clawed frog).